Here is a 284-residue protein sequence, read N- to C-terminus: Acetylglutamate kinase (284 aa).

Residues 54-55 (GG), Arg76, and Asn179 contribute to the substrate site.

It belongs to the acetylglutamate kinase family. ArgB subfamily.

It localises to the cytoplasm. The enzyme catalyses N-acetyl-L-glutamate + ATP = N-acetyl-L-glutamyl 5-phosphate + ADP. The protein operates within amino-acid biosynthesis; L-arginine biosynthesis; N(2)-acetyl-L-ornithine from L-glutamate: step 2/4. Functionally, catalyzes the ATP-dependent phosphorylation of N-acetyl-L-glutamate. In Sorangium cellulosum (strain So ce56) (Polyangium cellulosum (strain So ce56)), this protein is Acetylglutamate kinase.